A 686-amino-acid chain; its full sequence is MADIKTGIFAKNVQKRLNRAQEKVLQKLGKADETKDEQFEEYVQNFKRQEAEGTRLQRELRGYLAAIKGMQEASMKLTESLHEVYEPDWYGREDVKMVGEKCDVLWEDFHQKLVDGSLLTLDTYLGQFPDIKNRIAKRSRKLVDYDSARHHLEALQSSKRKDESRISKAEEEFQKAQKVFEEFNVDLQEELPSLWSSRVGFYVNTFKNVSSLEAKFHKEIAVLCHKLYEVMTKLGDQHADKAFSIQGAPSDSGPLRIAKTPSPPEEPSPLPSPTASPNHTLAPASPAPVRPRSPSQTRKGPPVPPLPKVTPTKELKQENIINFFEDNFVPEINVTTPSQNEVLEVKKEETLLDLDFDPFKPDVAPAGSAAATHSPMSQTLPWDLWTTSTDLVQPASGGSFNDFTQAQDTSLFTMQTDQNMAETEQALPTEPQAEEPPATAAAPTAGLDLGLEMEEPKEEAVIPPATDTGETVETAVPTEGAPVEEAEAEKAALPAGEGGSPEGAKIDGESTELAISESPQPVEPEAGAPQVIPSVVIEPASNHEGEGEHQETATGTEPREAAEDVAAQGSAGEKQEVATEPTPLDSQATLPASAGAVDASLSAGDATQELPPGFLYKVETLHDFEAANSDELNLQRGDVVLVVPSDSEADQDAGWLVGVKESDWLQYRDLATYKGLFPENFTRRLE.

2 coiled-coil regions span residues 10–83 and 144–191; these read AKNV…SLHE and DYDS…QEEL. Positions 24-240 constitute a BAR domain; it reads VLQKLGKADE…MTKLGDQHAD (217 aa). Disordered regions lie at residues 244 to 314, 421 to 441, and 483 to 597; these read SIQG…PTKE, AETEQALPTEPQAEEPPATAA, and VEEA…AGAV. Residue Ser252 is modified to Phosphoserine. A Phosphothreonine modification is found at Thr260. Pro residues predominate over residues 261-274; it reads PSPPEEPSPLPSPT. 4 positions are modified to phosphoserine: Ser262, Ser268, Ser272, and Ser276. Thr280 is modified (phosphothreonine). The span at 424-441 shows a compositional bias: low complexity; it reads EQALPTEPQAEEPPATAA. Residue Ser500 is modified to Phosphoserine. Residues 541–562 are compositionally biased toward basic and acidic residues; that stretch reads SNHEGEGEHQETATGTEPREAA. The region spanning 613 to 686 is the SH3 domain; it reads GFLYKVETLH…FPENFTRRLE (74 aa). Ser629 bears the Phosphoserine mark.

As to quaternary structure, heterodimer with BIN1. Binds SH3GLB1. Interacts with REPS1 and SGIP1. Binds AP2A2. Interacts with AP2B1. Interacts with DNM1 and SYNJ1.

The protein resides in the cytoplasmic vesicle. Its subcellular location is the secretory vesicle. It is found in the synaptic vesicle membrane. It localises to the cytoplasm. The protein localises to the cytoskeleton. Its function is as follows. May participate in mechanisms of regulated exocytosis in synapses and certain endocrine cell types. May control the properties of the membrane associated cytoskeleton. The protein is Amphiphysin (Amph) of Mus musculus (Mouse).